The chain runs to 260 residues: Indole-3-glycerol phosphate synthase (260 aa).

Belongs to the TrpC family.

The catalysed reaction is 1-(2-carboxyphenylamino)-1-deoxy-D-ribulose 5-phosphate + H(+) = (1S,2R)-1-C-(indol-3-yl)glycerol 3-phosphate + CO2 + H2O. The protein operates within amino-acid biosynthesis; L-tryptophan biosynthesis; L-tryptophan from chorismate: step 4/5. This is Indole-3-glycerol phosphate synthase from Lacticaseibacillus paracasei (strain ATCC 334 / BCRC 17002 / CCUG 31169 / CIP 107868 / KCTC 3260 / NRRL B-441) (Lactobacillus paracasei).